The chain runs to 183 residues: Peptidoglycan recognition protein 1 (183 aa).

A signal peptide spans 1-17; the sequence is MLFAWAPFPALLGLADS. Intrachain disulfides connect Cys-18–Cys-142, Cys-34–Cys-79, and Cys-55–Cys-61. The region spanning 40 to 168 is the N-acetylmuramoyl-L-alanine amidase domain; the sequence is KPVRYVVISH…RDVQSTLSPG (129 aa).

The protein belongs to the N-acetylmuramoyl-L-alanine amidase 2 family. In terms of tissue distribution, expressed in all regions of the brain.

The protein localises to the secreted. The protein resides in the cytoplasmic granule. In terms of biological role, innate immunity protein that plays several important functions in antimicrobial and antitumor defense systems. Acts as a pattern receptor that binds to murein peptidoglycans (PGN) of Gram-positive bacteria and thus provides bactericidal activity. Forms an equimolar complex with heat shock protein HSPA1A and induces programmed cell death through apoptosis and necroptosis in tumor cell lines by activating the TNFR1 receptor on the target cell membrane. In addition, acts in complex with the Ca(2+)-binding protein S100A4 as a chemoattractant able to induce lymphocyte movement. Mechanistically, this complex acts as a ligand of the chemotactic receptors CCR5 and CXCR3 which are present on the cells of the immune system. Promotes also the activation of lymphocytes that become able to kill virus-infected cells as well as tumor cells by modulating the spectrum of their target-cell specificity. Induction of cytotoxicity on monocyte surface requires interaction with TREM1 receptor. This chain is Peptidoglycan recognition protein 1 (Pglyrp1), found in Rattus norvegicus (Rat).